Here is a 262-residue protein sequence, read N- to C-terminus: Small ribosomal subunit protein uS2 (262 aa).

The tract at residues 223–262 (KSLLEQDGGEQAAGEEVSQDEKDAVVAEAMSEEDFGEDEE) is disordered. Positions 227–238 (EQDGGEQAAGEE) are enriched in low complexity. Positions 252–262 (MSEEDFGEDEE) are enriched in acidic residues.

This sequence belongs to the universal ribosomal protein uS2 family.

The protein is Small ribosomal subunit protein uS2 of Campylobacter concisus (strain 13826).